The chain runs to 300 residues: TLR adapter interacting with SLC15A4 on the lysosome (300 aa).

Residues 289–293 carry the pLxIS motif motif; sequence SLHIS. Phosphoserine is present on S293.

Interacts (via pLxIS motif) with IRF5; leading to IRF5 activation. Interacts with SLC15A4; leading to its recruitment to endolysosome. The phosphorylated pLxIS motif constitutes an IRF5-binding motif, leading to recruitment of the transcription factor IRF5 to induce type-I interferons and other cytokines.

Its subcellular location is the lysosome membrane. It is found in the endosome membrane. It localises to the nucleus. The protein localises to the cytoplasm. Functionally, innate immune adapter that mediates the recruitment and activation of IRF5 downstream of endolysosomal toll-like receptors TLR7, TLR8 and TLR9. Following recruitment to endolysosome by SLC15A4 downstream of TLR7, TLR8 and TLR9, specifically recruits IRF5 transcription factor via its pLxIS motif, leading to IRF5 activation and subsequent expression of type I interferons. Plays a role in the regulation of endolysosomal pH in immune cells such as B-cells, dendritic cells and monocytes. The polypeptide is TLR adapter interacting with SLC15A4 on the lysosome (Bos taurus (Bovine)).